The primary structure comprises 69 residues: Small, acid-soluble spore protein I (69 aa).

The protein belongs to the SspI family.

It localises to the spore core. The sequence is that of Small, acid-soluble spore protein I from Shouchella clausii (strain KSM-K16) (Alkalihalobacillus clausii).